Here is a 367-residue protein sequence, read N- to C-terminus: MSFNHIKKVIVGMSGGVDSSVSAWLLQQQGYKVEGLFMKNWEDDDSTEQCASASDLSDTHSVCDNLGIYLHTINFSKEYWENVFQVFLQEYSVGRTPNPDILCNKEIKFKYFLEFALQDLDADLIATGHYVRRVDMNKKTYLIRGVDRNKDQSYFLYTLSYKQLKQCLFPVGTLNKFQVRNIAKKLNLITANKKDSTGICFIGKRKFKDFISKYIPIRPGVIIDINGNTIGAHQGVSFYTLGQRKGLKIGGVKQGNGQPWYVIDKDTSNNTLIAAQGRNHPRLMSIAFITEQTQWVKRDALTSPLHCTVKTRYRHPDIQCQIYPLLNNNLKVILKIPVLAITPGQSAVFYLKERCLGGGIITKIYHC.

ATP-binding positions include 12-19 (GMSGGVDS) and Met38. Residues 98-100 (NPD) are interaction with target base in tRNA. The active-site Nucleophile is the Cys103. Cysteines 103 and 200 form a disulfide. Residue Gly128 coordinates ATP. An interaction with tRNA region spans residues 150 to 152 (KDQ). Cys200 serves as the catalytic Cysteine persulfide intermediate. Residues 312 to 313 (RY) form an interaction with tRNA region.

It belongs to the MnmA/TRMU family. Interacts with TusE.

Its subcellular location is the cytoplasm. It catalyses the reaction S-sulfanyl-L-cysteinyl-[protein] + uridine(34) in tRNA + AH2 + ATP = 2-thiouridine(34) in tRNA + L-cysteinyl-[protein] + A + AMP + diphosphate + H(+). Catalyzes the 2-thiolation of uridine at the wobble position (U34) of tRNA(Lys), tRNA(Glu) and tRNA(Gln), leading to the formation of s(2)U34, the first step of tRNA-mnm(5)s(2)U34 synthesis. Sulfur is provided by IscS, via a sulfur-relay system. Binds ATP and its substrate tRNAs. The chain is tRNA-specific 2-thiouridylase MnmA from Blochmanniella pennsylvanica (strain BPEN).